The chain runs to 173 residues: Co-chaperone protein HscB homolog (173 aa).

Positions 5–77 (CHFAQFDLQP…PRRALYLLTL (73 aa)) constitute a J domain.

It belongs to the HscB family. Interacts with HscA and stimulates its ATPase activity.

Functionally, co-chaperone involved in the maturation of iron-sulfur cluster-containing proteins. Seems to help targeting proteins to be folded toward HscA. The protein is Co-chaperone protein HscB homolog of Pseudomonas aeruginosa (strain UCBPP-PA14).